Here is a 218-residue protein sequence, read N- to C-terminus: Attacin-B (218 aa).

The N-terminal stretch at 1-17 is a signal peptide; it reads MQKTSILILALFAIAEA. Residues 18–28 constitute a propeptide that is removed on maturation; it reads VPTTGPIRVRR.

The protein belongs to the attacin/sarcotoxin-2 family. As to expression, hemolymph (at protein level).

Its subcellular location is the secreted. Hemolymph antibacterial protein. The polypeptide is Attacin-B (AttB) (Drosophila melanogaster (Fruit fly)).